Here is a 374-residue protein sequence, read N- to C-terminus: Histidine biosynthesis bifunctional protein HisB (374 aa).

Positions 1-183 are histidinol-phosphatase; the sequence is MKKKVLFIDR…RVAEFLFAGE (183 aa). Asp-9 functions as the Nucleophile in the catalytic mechanism. 3 residues coordinate Mg(2+): Asp-9, Asp-11, and Asp-131. The active-site Proton donor is Asp-11. Residues 184–374 are imidazoleglycerol-phosphate dehydratase; that stretch reads RRAEIRRTTK…FELPSSKGVL (191 aa).

In the N-terminal section; belongs to the histidinol-phosphatase family. The protein in the C-terminal section; belongs to the imidazoleglycerol-phosphate dehydratase family. Mg(2+) is required as a cofactor.

It is found in the cytoplasm. The enzyme catalyses D-erythro-1-(imidazol-4-yl)glycerol 3-phosphate = 3-(imidazol-4-yl)-2-oxopropyl phosphate + H2O. The catalysed reaction is L-histidinol phosphate + H2O = L-histidinol + phosphate. It functions in the pathway amino-acid biosynthesis; L-histidine biosynthesis; L-histidine from 5-phospho-alpha-D-ribose 1-diphosphate: step 6/9. The protein operates within amino-acid biosynthesis; L-histidine biosynthesis; L-histidine from 5-phospho-alpha-D-ribose 1-diphosphate: step 8/9. The polypeptide is Histidine biosynthesis bifunctional protein HisB (Bacteroides fragilis (strain ATCC 25285 / DSM 2151 / CCUG 4856 / JCM 11019 / LMG 10263 / NCTC 9343 / Onslow / VPI 2553 / EN-2)).